Here is a 779-residue protein sequence, read N- to C-terminus: Phosphoribosylformylglycinamidine synthase subunit PurL (779 aa).

Residue His52 is part of the active site. 2 residues coordinate ATP: Tyr55 and Lys94. Position 96 (Glu96) interacts with Mg(2+). Substrate-binding positions include 97–100 and Arg119; that span reads SHNH. The active-site Proton acceptor is His98. Asp120 serves as a coordination point for Mg(2+). Gln243 serves as a coordination point for substrate. Asp271 is a Mg(2+) binding site. Substrate is bound at residue 315–317; sequence ESQ. Residues Asn523 and Gly560 each coordinate ATP. Residue Asn561 participates in Mg(2+) binding. Ser563 is a substrate binding site.

This sequence belongs to the FGAMS family. In terms of assembly, monomer. Part of the FGAM synthase complex composed of 1 PurL, 1 PurQ and 2 PurS subunits.

Its subcellular location is the cytoplasm. The catalysed reaction is N(2)-formyl-N(1)-(5-phospho-beta-D-ribosyl)glycinamide + L-glutamine + ATP + H2O = 2-formamido-N(1)-(5-O-phospho-beta-D-ribosyl)acetamidine + L-glutamate + ADP + phosphate + H(+). It participates in purine metabolism; IMP biosynthesis via de novo pathway; 5-amino-1-(5-phospho-D-ribosyl)imidazole from N(2)-formyl-N(1)-(5-phospho-D-ribosyl)glycinamide: step 1/2. Part of the phosphoribosylformylglycinamidine synthase complex involved in the purines biosynthetic pathway. Catalyzes the ATP-dependent conversion of formylglycinamide ribonucleotide (FGAR) and glutamine to yield formylglycinamidine ribonucleotide (FGAM) and glutamate. The FGAM synthase complex is composed of three subunits. PurQ produces an ammonia molecule by converting glutamine to glutamate. PurL transfers the ammonia molecule to FGAR to form FGAM in an ATP-dependent manner. PurS interacts with PurQ and PurL and is thought to assist in the transfer of the ammonia molecule from PurQ to PurL. The polypeptide is Phosphoribosylformylglycinamidine synthase subunit PurL (Prochlorococcus marinus (strain MIT 9301)).